Here is a 498-residue protein sequence, read N- to C-terminus: Flagellin (498 aa).

This sequence belongs to the bacterial flagellin family.

The protein resides in the secreted. It localises to the bacterial flagellum. Its function is as follows. Flagellin is the subunit protein which polymerizes to form the filaments of bacterial flagella. The chain is Flagellin (fliC) from Escherichia coli (strain K12).